Reading from the N-terminus, the 505-residue chain is Maturase K (505 aa).

It belongs to the intron maturase 2 family. MatK subfamily.

It is found in the plastid. It localises to the chloroplast. Functionally, usually encoded in the trnK tRNA gene intron. Probably assists in splicing its own and other chloroplast group II introns. The polypeptide is Maturase K (Morus alba (White mulberry)).